A 100-amino-acid chain; its full sequence is Aspartyl/glutamyl-tRNA(Asn/Gln) amidotransferase subunit C (100 aa).

The protein belongs to the GatC family. In terms of assembly, heterotrimer of A, B and C subunits.

It catalyses the reaction L-glutamyl-tRNA(Gln) + L-glutamine + ATP + H2O = L-glutaminyl-tRNA(Gln) + L-glutamate + ADP + phosphate + H(+). It carries out the reaction L-aspartyl-tRNA(Asn) + L-glutamine + ATP + H2O = L-asparaginyl-tRNA(Asn) + L-glutamate + ADP + phosphate + 2 H(+). In terms of biological role, allows the formation of correctly charged Asn-tRNA(Asn) or Gln-tRNA(Gln) through the transamidation of misacylated Asp-tRNA(Asn) or Glu-tRNA(Gln) in organisms which lack either or both of asparaginyl-tRNA or glutaminyl-tRNA synthetases. The reaction takes place in the presence of glutamine and ATP through an activated phospho-Asp-tRNA(Asn) or phospho-Glu-tRNA(Gln). This is Aspartyl/glutamyl-tRNA(Asn/Gln) amidotransferase subunit C from Rickettsia africae (strain ESF-5).